The sequence spans 154 residues: Snaclec dabocetin subunit alpha (154 aa).

The signal sequence occupies residues 1–23 (MGRFISVSFGLLVVFLSLSGTGA). Intrachain disulfides connect C25-C36, C53-C148, and C123-C140. A C-type lectin domain is found at 32 to 149 (HEGHCYKVFK…CGDKNPFICK (118 aa)).

This sequence belongs to the snaclec family. In terms of assembly, heterodimer of subunits alpha and beta; disulfide-linked. Expressed by the venom gland.

The protein resides in the secreted. Its function is as follows. Inhibits ristocetin-induced platelet aggregation via binding to platelet glycoprotein Ibalpha (GP1BA). The protein is Snaclec dabocetin subunit alpha of Daboia siamensis (Eastern Russel's viper).